Here is a 1162-residue protein sequence, read N- to C-terminus: Reticulon-4 (1162 aa).

At Met-1 the chain carries N-acetylmethionine. The tract at residues 1–183 is disordered; it reads MEDIDQSSLV…ALPAASEPVI (183 aa). Residues 1 to 988 are Cytoplasmic-facing; sequence MEDIDQSSLV…LYWRDIKKTG (988 aa). Residues Ser-7 and Ser-16 each carry the phosphoserine modification. The segment covering 7–16 has biased composition (low complexity); the sequence is SSLVSSSADS. Over residues 31–54 the composition is skewed to acidic residues; the sequence is EPEDEEDEEDEEEEEDDEDLEELE. Positions 85–99 are enriched in pro residues; sequence PPAPRGPLPAAPPTA. Position 105 is a phosphoserine (Ser-105). Residues 109-127 are compositionally biased toward low complexity; that stretch reads SPAASAPSLPPAAAVLPSK. 5 positions are modified to phosphoserine: Ser-145, Ser-165, Ser-167, Ser-329, and Ser-344. The residue at position 348 (Thr-348) is a Phosphothreonine. Over residues 408–422 the composition is skewed to basic and acidic residues; sequence SLEQKGHGKDSESRN. Positions 408–432 are disordered; sequence SLEQKGHGKDSESRNENASFPRTPE. At Ser-426 the chain carries Phosphoserine. The residue at position 430 (Thr-430) is a Phosphothreonine. Residues Ser-489, Ser-690, Ser-727, Ser-768, and Ser-832 each carry the phosphoserine modification. Residues 711 to 730 are disordered; that stretch reads ELVDDSSPESEPVDLFSDDS. Residues 713 to 730 show a composition bias toward acidic residues; it reads VDDSSPESEPVDLFSDDS. Thr-834 carries the post-translational modification Phosphothreonine. 2 positions are modified to phosphoserine: Ser-857 and Ser-961. One can recognise a Reticulon domain in the interval 975–1162; it reads VVDLLYWRDI…KIPGLKRKAE (188 aa). A helical transmembrane segment spans residues 989–1009; that stretch reads VVFGASLFLLLSLTVFSIVSV. The Lumenal segment spans residues 1010-1078; it reads TAYIALALLS…VNSTIKELRR (69 aa). Lys-1074 is subject to N6-acetyllysine. The chain crosses the membrane as a helical span at residues 1079–1099; that stretch reads LFLVDDLVDSLKFAVLMWVFT. Residues 1100–1162 are Cytoplasmic-facing; the sequence is YVGALFNGLT…KIPGLKRKAE (63 aa).

Binds to RTN4R. Interacts with ATL1. Interacts with TMEM170A. Interacts with RTN4IP1. As to quaternary structure, interacts in trans with CNTNAP1. Interacts with REEP5. Interacts with GPR50. Interacts with synaptic plasticity regulator PANTS; the interaction results in enhanced RTN4-mediated inhibition of AMPA receptor clustering. In terms of assembly, homodimer. Interacts with BAD/Bcl-xl and BCL2. Interact with RTN3. Interacts with NGBR. Interacts with SPTLC1. Interacts with GRAMD4. Interacts with CDH5. Interacts with BACE1 and BACE2. Interacts with REEP5. Interacts with RETREG3. Interacts with BACE1 and BACE2. Interacts with TMEM33. In terms of tissue distribution, expressed in cardiomyocytes (at protein level). Highly expressed in brain but not deteceted in aorta, femoral and carotid arteries. Main isoform expressed in neurons. Expressed in cardiomyocytes (at protein level). Expressed in splenocytes, T-cells, B-cells, bone marrow derived dendritic cells and macrophages (at protein level). Expressed in neurons. Highly expressed in endothelial cells and vascular smooth muscle cells, including blood vessels and mesenteric arteries. Expressed in bronchial and alveolar epithelial cells as well as vascular endothelial cells of lungs. As to expression, expressed in B-cells, bone marrow dendritic cells and macrophages (at protein level). In terms of tissue distribution, expressed in cardiomyocytes. Expressed at very low levels in neurons.

The protein resides in the endoplasmic reticulum membrane. It is found in the cell membrane. The protein localises to the synapse. It localises to the cell junction. Functionally, required to induce the formation and stabilization of endoplasmic reticulum (ER) tubules. They regulate membrane morphogenesis in the ER by promoting tubular ER production. They influence nuclear envelope expansion, nuclear pore complex formation and proper localization of inner nuclear membrane proteins. However each isoform have specific functions mainly depending on their tissue expression specificities. Developmental neurite growth regulatory factor with a role as a negative regulator of axon-axon adhesion and growth, and as a facilitator of neurite branching. Regulates neurite fasciculation, branching and extension in the developing nervous system. Involved in down-regulation of growth, stabilization of wiring and restriction of plasticity in the adult CNS. Regulates the radial migration of cortical neurons via an RTN4R-LINGO1 containing receptor complex. Acts as a negative regulator of central nervous system angiogenesis. Inhibits spreading, migration and sprouting of primary brain microvascular endothelial cells (MVECs). Also induces the retraction of MVECs lamellipodia and filopodia in a ROCK pathway-dependent manner. Its function is as follows. Mainly function in endothelial cells and vascular smooth muscle cells, is also involved in immune system regulation. Modulator of vascular remodeling, promotes the migration of endothelial cells but inhibits the migration of vascular smooth muscle cells. Regulates endothelial sphingolipid biosynthesis with direct effects on vascular function and blood pressure. Inhibits serine palmitoyltransferase, SPTLC1, the rate-limiting enzyme of the novo sphingolipid biosynthetic pathway, thereby controlling production of endothelial sphingosine-1-phosphate (S1P). Required to promote macrophage homing and functions such as cytokine/chemokine gene expression involved in angiogenesis, arteriogenesis and tissue repair. Mediates ICAM1 induced transendothelial migration of leukocytes such as monocytes and neutrophils and acute inflammation. Necessary for immune responses triggered by nucleic acid sensing TLRs, such as TLR9, is required for proper TLR9 location to endolysosomes. Also involved in immune response to LPS. Plays a role in liver regeneration through the modulation of hepatocytes proliferation. Reduces the anti-apoptotic activity of Bcl-xl and Bcl-2. This is likely consecutive to their change in subcellular location, from the mitochondria to the endoplasmic reticulum, after binding and sequestration. With isoform C, inhibits BACE1 activity and amyloid precursor protein processing. In terms of biological role, regulates cardiomyocyte apoptosis upon hypoxic conditions. With isoform B, inhibits BACE1 activity and amyloid precursor protein processing. The chain is Reticulon-4 from Mus musculus (Mouse).